Reading from the N-terminus, the 181-residue chain is Inner membrane-spanning protein YciB (181 aa).

A run of 5 helical transmembrane segments spans residues 8 to 28, 53 to 73, 76 to 96, 121 to 141, and 149 to 169; these read FPII…ATAA, ITLI…NAIF, WKPT…HFFG, LSWA…VYNF, and FKLF…AFYI.

Belongs to the YciB family.

It localises to the cell inner membrane. In terms of biological role, plays a role in cell envelope biogenesis, maintenance of cell envelope integrity and membrane homeostasis. This is Inner membrane-spanning protein YciB from Coxiella burnetii (strain CbuG_Q212) (Coxiella burnetii (strain Q212)).